The chain runs to 574 residues: Putative ABC transporter ATP-binding protein VV2_1533 (574 aa).

2 consecutive ABC transporter domains span residues 3–244 (IEFS…GIRE) and 299–533 (LDVR…ANLT). ATP contacts are provided by residues 37-44 (GPSGSGKS) and 332-339 (GKNGSGKS).

Belongs to the ABC transporter superfamily.

Its subcellular location is the cell inner membrane. Its function is as follows. Probably part of an ABC transporter complex. Responsible for energy coupling to the transport system. This chain is Putative ABC transporter ATP-binding protein VV2_1533, found in Vibrio vulnificus (strain CMCP6).